The following is a 229-amino-acid chain: uncharacterized protein (229 aa).

The segment at 1 to 41 is disordered; sequence MRSAKVGVARQLETKKPQTGRKISTSSRGTIHSQQSQPEDI. Over residues 21-39 the composition is skewed to polar residues; it reads RKISTSSRGTIHSQQSQPE. EF-hand domains lie at 48 to 83, 84 to 119, 123 to 158, and 159 to 193; these read KELKEYRQLFNMFDTDGSGAIGNEELKQAMISIGLH, ANKAEIDNVIKEVDADGNGEIDFEEFCACMKKSQNI, TNEELIRECFEIFDQDRNGIITENEFKYIAKEFGDF, and DDELAEKVFRELDVSANGHLSADQFATIVEDYLLN. Residues D61, D63, S65, E72, D97, D99, N101, E103, E108, D136, D138, N140, and E147 each contribute to the Ca(2+) site. Residues 194 to 217 are compositionally biased toward basic and acidic residues; the sequence is DPKHDIDTGDSDVERYDDRHDDRA. Positions 194 to 229 are disordered; that stretch reads DPKHDIDTGDSDVERYDDRHDDRASPMPNHLSTVPE.

This is an uncharacterized protein from Caenorhabditis elegans.